An 882-amino-acid chain; its full sequence is Alanine--tRNA ligase (882 aa).

Zn(2+) contacts are provided by H576, H580, C678, and H682.

Belongs to the class-II aminoacyl-tRNA synthetase family. It depends on Zn(2+) as a cofactor.

The protein localises to the cytoplasm. It carries out the reaction tRNA(Ala) + L-alanine + ATP = L-alanyl-tRNA(Ala) + AMP + diphosphate. Functionally, catalyzes the attachment of alanine to tRNA(Ala) in a two-step reaction: alanine is first activated by ATP to form Ala-AMP and then transferred to the acceptor end of tRNA(Ala). Also edits incorrectly charged Ser-tRNA(Ala) and Gly-tRNA(Ala) via its editing domain. The sequence is that of Alanine--tRNA ligase from Anaplasma marginale (strain St. Maries).